The primary structure comprises 134 residues: Putative pre-16S rRNA nuclease (134 aa).

The protein belongs to the YqgF nuclease family.

It localises to the cytoplasm. Its function is as follows. Could be a nuclease involved in processing of the 5'-end of pre-16S rRNA. The sequence is that of Putative pre-16S rRNA nuclease from Helicobacter pylori (strain Shi470).